The primary structure comprises 1007 residues: Sal-like protein 2 (1007 aa).

The disordered stretch occupies residues 1 to 33 (MSRRKQRKPQQLISDCEGPSASENGDASEEDHP). The C2H2-type 1; atypical zinc-finger motif lies at 34–56 (QVCAKCCAQFTDPTEFLAHQNAC). 4 disordered regions span residues 59–121 (DPPV…GEES), 137–177 (GGGL…SGHL), 220–243 (PASP…PLFS), and 286–306 (PFSA…SPAL). The segment covering 70–80 (ENPNNSSASSE) has biased composition (low complexity). Polar residues predominate over residues 99–108 (PPDSGSSVPT). Over residues 151-171 (PLPPESTPAPPPPPPPPPPPG) the composition is skewed to pro residues. Ser243 is modified (phosphoserine). 2 consecutive C2H2-type zinc fingers follow at residues 373–395 (HKCR…LRSH) and 401–423 (YKCN…FHRH). Disordered stretches follow at residues 520 to 540 (KNKA…SGVA) and 610 to 629 (AASG…ASSG). C2H2-type zinc fingers lie at residues 631 to 653 (NQCV…YGQH), 659 to 681 (FKCK…FVGH), and 691 to 713 (NSCP…VRMH). The segment at 714 to 886 (LGGQIPNGGT…SALTPEGEAT (173 aa)) is disordered. Residues 734 to 744 (ENGSEQSTVSG) are compositionally biased toward polar residues. Low complexity predominate over residues 747-757 (SFPQQQSQQPS). The segment covering 758-782 (PEEELSEEEEEEDEEEEEDVTDEDS) has biased composition (acidic residues). Ser797, Ser802, and Ser806 each carry phosphoserine. Positions 803-812 (EEASGAEEEV) are enriched in acidic residues. Residues 862–871 (GKEEGGKPER) show a composition bias toward basic and acidic residues. Lys911 is covalently cross-linked (Glycyl lysine isopeptide (Lys-Gly) (interchain with G-Cter in ubiquitin)). 2 consecutive C2H2-type zinc fingers follow at residues 911 to 933 (KACE…QKTH) and 940 to 963 (FTCV…LLAH).

The protein belongs to the sal C2H2-type zinc-finger protein family. Highest levels in adult brain (in different areas). Lower levels in heart; very low levels in kidney and pancreas. Expressed throughout the retina and lens vesicle as well as the periocular mesenchyme.

It is found in the nucleus. Functionally, probable transcription factor that plays a role in eye development before, during, and after optic fissure closure. This chain is Sal-like protein 2 (SALL2), found in Homo sapiens (Human).